We begin with the raw amino-acid sequence, 391 residues long: tRNA-specific 2-thiouridylase MnmA (391 aa).

Residues 9–16 (GMSGGVDS) and M35 each bind ATP. Residues 95 to 97 (NPD) are interaction with target base in tRNA. C100 serves as the catalytic Nucleophile. C100 and C196 are oxidised to a cystine. G124 is a binding site for ATP. The tract at residues 146 to 148 (KDQ) is interaction with tRNA. The active-site Cysteine persulfide intermediate is the C196. Residues 308 to 309 (RY) are interaction with tRNA.

Belongs to the MnmA/TRMU family.

It is found in the cytoplasm. The enzyme catalyses S-sulfanyl-L-cysteinyl-[protein] + uridine(34) in tRNA + AH2 + ATP = 2-thiouridine(34) in tRNA + L-cysteinyl-[protein] + A + AMP + diphosphate + H(+). In terms of biological role, catalyzes the 2-thiolation of uridine at the wobble position (U34) of tRNA, leading to the formation of s(2)U34. The sequence is that of tRNA-specific 2-thiouridylase MnmA from Burkholderia cenocepacia (strain HI2424).